We begin with the raw amino-acid sequence, 1096 residues long: Inactive phospholipase C-like protein 1 (1096 aa).

Positions 1 to 101 are disordered; the sequence is MAEGAASREA…KKTVSFSSMP (101 aa). Residues 26 to 41 are compositionally biased toward low complexity; it reads GADAASGDAAPEASGG. A phosphoserine mark is found at S48 and S78. The interval 83–222 is interaction with PPP1C; that stretch reads PSNQKCGGRK…NIWVSGLRYL (140 aa). T94 is modified (phosphothreonine). Phosphoserine is present on S96. The region spanning 114-224 is the PH domain; it reads SFMQAGCELK…WVSGLRYLVS (111 aa). The 145-residue stretch at 399-543 folds into the PI-PLC X-box domain; that stretch reads QDMTQPLSHY…LKHMIIVKGK (145 aa). Positions 544–568 are interaction with GABA A beta subunit; that stretch reads KLPSESDLLEGEVTDEDEEAEMSRR. At T557 the chain carries Phosphothreonine. S570 bears the Phosphoserine mark. The region spanning 586-702 is the PI-PLC Y-box domain; it reads LSDLVSICKS…GYVLRPSIMR (117 aa). A C2 domain is found at 702–831; sequence RDEVSYFSAN…PGYRHVPLRS (130 aa). A coiled-coil region spans residues 1040 to 1060; that stretch reads DLLKNAKNEAVENIKQIQLAC. Residues 1067–1096 are disordered; that stretch reads KGPGSAAEAKGKRSLEAIEEKESSEENGKL. Residues 1075 to 1096 show a composition bias toward basic and acidic residues; it reads AKGKRSLEAIEEKESSEENGKL. S1080 bears the Phosphoserine mark.

The protein belongs to the PRIP family. In terms of assembly, interacts with PPP2CA, GABA receptor beta subunits, GABA receptor gamma-2 subunits. Interacts with Ins(1,4,5)P3, Ins(1,4,5,6)P4, GABARAP, and PPP1C. May form a ternary complex with GABA receptor beta subunit and GABARAP. The formation of a ternary complex with GABA receptor beta subunit and GABARAP could be the key step for facilitating the association of GABARAP with the GABA receptor gamma-2 subunit and to allow it to be transported at the right destination. Phosphorylation of Thr-94 resulted in dissociation of PPP1C from PRIP1. In vitro, phosphorylated by the catalytic subunit of PKA. As to expression, expressed in brain. Found in the granular cell and Purkinje cell layers in the cerebellum; and in the hippocampal pyramidal cells, dentate granule cells and pyramidal granule cells of the cerebral cortex in the cerebrum.

It localises to the cytoplasm. Involved in an inositol phospholipid-based intracellular signaling cascade. Shows no PLC activity to phosphatidylinositol 4,5-bisphosphate and phosphatidylinositol. Component in the phospho-dependent endocytosis process of GABA A receptor. Acts as an inhibitor of PPP1C. The polypeptide is Inactive phospholipase C-like protein 1 (Plcl1) (Rattus norvegicus (Rat)).